Consider the following 805-residue polypeptide: Sucrose synthase 1 (805 aa).

The tract at residues 274 to 751 (MVFNVVILSP…GLQRIYEKYT (478 aa)) is GT-B glycosyltransferase.

It belongs to the glycosyltransferase 1 family. Plant sucrose synthase subfamily.

It carries out the reaction an NDP-alpha-D-glucose + D-fructose = a ribonucleoside 5'-diphosphate + sucrose + H(+). Functionally, sucrose-cleaving enzyme that provides UDP-glucose and fructose for various metabolic pathways. The polypeptide is Sucrose synthase 1 (Tulipa gesneriana (Garden tulip)).